Here is a 179-residue protein sequence, read N- to C-terminus: UPF0227 protein VP0969 (179 aa).

Belongs to the UPF0227 family.

In Vibrio parahaemolyticus serotype O3:K6 (strain RIMD 2210633), this protein is UPF0227 protein VP0969.